The sequence spans 1279 residues: Talin-A (1279 aa).

Residues 84–365 (RPQKFKLLDG…GYIEIIMKAR (282 aa)) enclose the FERM domain.

The protein resides in the cytoplasm. It localises to the cytoskeleton. The protein localises to the cell cortex. In terms of biological role, actin-binding protein that may be involved in the control of cell motility and chemotaxis. The polypeptide is Talin-A (talA) (Dictyostelium discoideum (Social amoeba)).